We begin with the raw amino-acid sequence, 235 residues long: Urease accessory protein UreF (235 aa).

This sequence belongs to the UreF family. As to quaternary structure, ureD, UreF and UreG form a complex that acts as a GTP-hydrolysis-dependent molecular chaperone, activating the urease apoprotein by helping to assemble the nickel containing metallocenter of UreC. The UreE protein probably delivers the nickel.

The protein localises to the cytoplasm. Required for maturation of urease via the functional incorporation of the urease nickel metallocenter. In Haemophilus influenzae (strain PittGG), this protein is Urease accessory protein UreF.